The sequence spans 210 residues: Outer surface protein C (210 aa).

Positions 1 to 18 (MKKNTLSAILMTLFLFIS) are cleaved as a signal peptide. C19 carries the N-palmitoyl cysteine lipid modification. C19 carries S-diacylglycerol cysteine lipidation.

The protein belongs to the OspC lipoprotein family. Homodimer. Binds human plasminogen on the bacterial surface, also binds human plasmin. Interacts with tick I.ricinus salivary protein Iric-1. Interacts with human complement C4 beta chain (C4B); whole bacteria bind to wells coated with C4b. Binding is inhibited by human complement factor C2.

Its subcellular location is the cell outer membrane. It is found in the cell surface. In terms of biological role, a major immunodominant protein in mammalian hosts. Required for the initial stages of mammalian infection. Interaction with tick I.ricinus salivary protein Salp15 protects the bacteria from antibody-mediated killing in vitro and in vivo. Inhibits macrophage-mediated phagocytosis of the bacteria. Binds human plasminogen; this probably confers an extracellular protease activity on the bacteria that allows it to traverse tissue. Binds human complement C4-B, which may inhibit the complement cascade. Experiments in mice suggest it may play another role after initial infection. The chain is Outer surface protein C from Borreliella burgdorferi (strain ATCC 35210 / DSM 4680 / CIP 102532 / B31) (Borrelia burgdorferi).